Here is a 347-residue protein sequence, read N- to C-terminus: Eukaryotic translation initiation factor 3 subunit I (347 aa).

WD repeat units follow at residues 8–47, 50–89, 91–135, 151–190, 193–232, and 290–329; these read GHER…RLGT, GHTG…VIHT, TAPV…VTKE, ENHK…FITS, LHTQ…QLKS, and GHFG…FDFK.

It belongs to the eIF-3 subunit I family. Component of the eukaryotic translation initiation factor 3 (eIF-3) complex.

It localises to the cytoplasm. Its function is as follows. Component of the eukaryotic translation initiation factor 3 (eIF-3) complex, which is involved in protein synthesis of a specialized repertoire of mRNAs and, together with other initiation factors, stimulates binding of mRNA and methionyl-tRNAi to the 40S ribosome. The eIF-3 complex specifically targets and initiates translation of a subset of mRNAs involved in cell proliferation. The chain is Eukaryotic translation initiation factor 3 subunit I from Vanderwaltozyma polyspora (strain ATCC 22028 / DSM 70294 / BCRC 21397 / CBS 2163 / NBRC 10782 / NRRL Y-8283 / UCD 57-17) (Kluyveromyces polysporus).